Here is a 113-residue protein sequence, read N- to C-terminus: U11-theraphotoxin-Hhn1j (113 aa).

Residues 1–21 (MNTVRVTFLLVFVLAVSLGQA) form the signal peptide. Positions 22-74 (DKDENRMEMQEKTEQGKSYLDFAENLLLQKLEELEAKLLEEDSEESRNSRQKR) are excised as a propeptide. Residues 60-69 (LEEDSEESRN) show a composition bias toward basic and acidic residues. The tract at residues 60–83 (LEEDSEESRNSRQKRCIGEGVPCD) is disordered. Cystine bridges form between cysteine 75–cysteine 90, cysteine 82–cysteine 95, and cysteine 89–cysteine 110.

It belongs to the neurotoxin 14 (magi-1) family. 01 (HNTX-16) subfamily. Expressed by the venom gland.

The protein localises to the secreted. Functionally, probable ion channel inhibitor. The sequence is that of U11-theraphotoxin-Hhn1j from Cyriopagopus hainanus (Chinese bird spider).